Reading from the N-terminus, the 137-residue chain is Large ribosomal subunit protein uL11 (137 aa).

Belongs to the universal ribosomal protein uL11 family. Part of the ribosomal stalk of the 50S ribosomal subunit. Interacts with L10 and the large rRNA to form the base of the stalk. L10 forms an elongated spine to which L12 dimers bind in a sequential fashion forming a multimeric L10(L12)X complex. One or more lysine residues are methylated.

Functionally, forms part of the ribosomal stalk which helps the ribosome interact with GTP-bound translation factors. The protein is Large ribosomal subunit protein uL11 of Mycoplasma pneumoniae (strain ATCC 29342 / M129 / Subtype 1) (Mycoplasmoides pneumoniae).